The chain runs to 148 residues: ATP synthase epsilon chain (148 aa).

It belongs to the ATPase epsilon chain family. F-type ATPases have 2 components, CF(1) - the catalytic core - and CF(0) - the membrane proton channel. CF(1) has five subunits: alpha(3), beta(3), gamma(1), delta(1), epsilon(1). CF(0) has three main subunits: a, b and c.

Its subcellular location is the cell membrane. Functionally, produces ATP from ADP in the presence of a proton gradient across the membrane. The sequence is that of ATP synthase epsilon chain from Streptococcus thermophilus (strain ATCC BAA-491 / LMD-9).